The primary structure comprises 407 residues: Methylthioribose kinase (407 aa).

Residues Asn-40, Lys-57, and 111 to 113 (EDL) each bind ATP. A substrate-binding site is contributed by Asp-229. 246–248 (DAE) is a binding site for ATP. Arg-344 provides a ligand contact to substrate.

The protein belongs to the methylthioribose kinase family. In terms of assembly, homodimer.

The catalysed reaction is 5-(methylsulfanyl)-D-ribose + ATP = 5-(methylsulfanyl)-alpha-D-ribose 1-phosphate + ADP + H(+). It functions in the pathway amino-acid biosynthesis; L-methionine biosynthesis via salvage pathway; S-methyl-5-thio-alpha-D-ribose 1-phosphate from S-methyl-5'-thioadenosine (hydrolase route): step 2/2. Catalyzes the phosphorylation of methylthioribose into methylthioribose-1-phosphate. This is Methylthioribose kinase from Yersinia pseudotuberculosis serotype O:1b (strain IP 31758).